The following is a 166-amino-acid chain: NAD(P)H-quinone oxidoreductase subunit I, chloroplastic (166 aa).

4Fe-4S ferredoxin-type domains follow at residues 55-84 (GRIHFEFDKCIACEVCVRVCPIDLPVVDWK) and 95-124 (LNYSIDFGICIFCGNCVEYCPTNCLSMTEE). [4Fe-4S] cluster is bound by residues C64, C67, C70, C74, C104, C107, C110, and C114.

This sequence belongs to the complex I 23 kDa subunit family. As to quaternary structure, NDH is composed of at least 16 different subunits, 5 of which are encoded in the nucleus. Requires [4Fe-4S] cluster as cofactor.

It localises to the plastid. The protein resides in the chloroplast thylakoid membrane. It catalyses the reaction a plastoquinone + NADH + (n+1) H(+)(in) = a plastoquinol + NAD(+) + n H(+)(out). The enzyme catalyses a plastoquinone + NADPH + (n+1) H(+)(in) = a plastoquinol + NADP(+) + n H(+)(out). In terms of biological role, NDH shuttles electrons from NAD(P)H:plastoquinone, via FMN and iron-sulfur (Fe-S) centers, to quinones in the photosynthetic chain and possibly in a chloroplast respiratory chain. The immediate electron acceptor for the enzyme in this species is believed to be plastoquinone. Couples the redox reaction to proton translocation, and thus conserves the redox energy in a proton gradient. The protein is NAD(P)H-quinone oxidoreductase subunit I, chloroplastic of Marshallia caespitosa (Barbara's buttons).